The sequence spans 1155 residues: ATP-dependent helicase/deoxyribonuclease subunit B (1155 aa).

ATP is bound at residue 8-15 (GRSGSGKS). 4 residues coordinate [4Fe-4S] cluster: Cys-793, Cys-1115, Cys-1118, and Cys-1124.

Belongs to the helicase family. AddB/RexB type 1 subfamily. As to quaternary structure, heterodimer of AddA and AddB. Mg(2+) serves as cofactor. The cofactor is [4Fe-4S] cluster.

Functionally, the heterodimer acts as both an ATP-dependent DNA helicase and an ATP-dependent, dual-direction single-stranded exonuclease. Recognizes the chi site generating a DNA molecule suitable for the initiation of homologous recombination. The AddB subunit has 5' -&gt; 3' nuclease activity but not helicase activity. The sequence is that of ATP-dependent helicase/deoxyribonuclease subunit B from Clostridioides difficile (strain 630) (Peptoclostridium difficile).